A 268-amino-acid chain; its full sequence is Adenosylcobinamide-GDP ribazoletransferase (268 aa).

Transmembrane regions (helical) follow at residues 1–21 (MAGNLLNGLRAAIAFLTTLPV), 36–56 (YLFIPVAIVTGLLLGVAGTLF), 59–79 (ILPAPFAAVLTVACIFLLTGI), 112–132 (AGGLLFMAMDLLFLFALAMTF), 138–158 (WLFVPLLVAEGCAKVAQITII), 182–202 (LAAVIGAWIAIGIAIIGAAII), 212–232 (IMAGGLAMLSPLAVALIILII), and 244–264 (VIGAANEIARIAALGVMGAVL).

It belongs to the CobS family. Requires Mg(2+) as cofactor.

The protein localises to the cell membrane. The enzyme catalyses alpha-ribazole + adenosylcob(III)inamide-GDP = adenosylcob(III)alamin + GMP + H(+). It catalyses the reaction alpha-ribazole 5'-phosphate + adenosylcob(III)inamide-GDP = adenosylcob(III)alamin 5'-phosphate + GMP + H(+). The protein operates within cofactor biosynthesis; adenosylcobalamin biosynthesis; adenosylcobalamin from cob(II)yrinate a,c-diamide: step 7/7. In terms of biological role, joins adenosylcobinamide-GDP and alpha-ribazole to generate adenosylcobalamin (Ado-cobalamin). Also synthesizes adenosylcobalamin 5'-phosphate from adenosylcobinamide-GDP and alpha-ribazole 5'-phosphate. This is Adenosylcobinamide-GDP ribazoletransferase from Methanocella arvoryzae (strain DSM 22066 / NBRC 105507 / MRE50).